Here is a 498-residue protein sequence, read N- to C-terminus: ATP synthase subunit beta, chloroplastic (498 aa).

An ATP-binding site is contributed by 172–179 (GGAGVGKT).

Belongs to the ATPase alpha/beta chains family. F-type ATPases have 2 components, CF(1) - the catalytic core - and CF(0) - the membrane proton channel. CF(1) has five subunits: alpha(3), beta(3), gamma(1), delta(1), epsilon(1). CF(0) has four main subunits: a(1), b(1), b'(1) and c(9-12).

It localises to the plastid. The protein localises to the chloroplast thylakoid membrane. It catalyses the reaction ATP + H2O + 4 H(+)(in) = ADP + phosphate + 5 H(+)(out). Functionally, produces ATP from ADP in the presence of a proton gradient across the membrane. The catalytic sites are hosted primarily by the beta subunits. The chain is ATP synthase subunit beta, chloroplastic from Liriodendron tulipifera (Tuliptree).